The following is a 66-amino-acid chain: Xenoxin-3 (66 aa).

4 disulfides stabilise this stretch: C3–C24, C17–C37, C43–C58, and C59–C64.

Expressed by the skin dorsal glands.

It is found in the secreted. Functionally, lacks alpha-neurotoxic activity, has apparently no antibacterial activity, nor anti-coagulant potency. The polypeptide is Xenoxin-3 (Xenopus laevis (African clawed frog)).